The chain runs to 292 residues: Inhibitory synaptic factor 1 (292 aa).

Disordered stretches follow at residues 1 to 25, 122 to 186, and 198 to 292; these read MNIRGTPDLGQPSDDPSSGGERERI, SDSV…ERVR, and CDDE…KGKN. A coiled-coil region spans residues 23-63; that stretch reads ERIRQRMKMVIGQLEDILRELKEVAKELREVVSQIDKLTSD. Residues 198–214 show a composition bias toward acidic residues; sequence CDDEEGDGEEEAAEEEG. Residues 263–285 show a composition bias toward polar residues; that stretch reads RNSSTQTVSDKSTQTVLPYTATR.

The protein belongs to the INSYN1 family. As to quaternary structure, interacts with GPHN.

It localises to the postsynaptic density. In terms of biological role, component of the protein machinery at the inhibitory synapses, probably acting as a scaffold. Inhibitory synapses dampen neuronal activity through postsynaptic hyperpolarization. This synaptic inhibition is fundamental for the functioning of the central nervous system, shaping and orchestrating the flow of information through neuronal networks to generate a precise neural code. The protein is Inhibitory synaptic factor 1 of Bos taurus (Bovine).